The primary structure comprises 249 residues: Proteasome subunit alpha type-7-1A (249 aa).

The protein belongs to the peptidase T1A family. In terms of assembly, the 26S proteasome consists of a 20S proteasome core and two 19S regulatory subunits. The 20S proteasome core is composed of 28 subunits that are arranged in four stacked rings, resulting in a barrel-shaped structure. The two end rings are each formed by seven alpha subunits, and the two central rings are each formed by seven beta subunits. The catalytic chamber with the active sites is on the inside of the barrel. Testis specific.

The protein localises to the cytoplasm. It localises to the nucleus. In terms of biological role, the proteasome is a multicatalytic proteinase complex which is characterized by its ability to cleave peptides with Arg, Phe, Tyr, Leu, and Glu adjacent to the leaving group at neutral or slightly basic pH. The proteasome has an ATP-dependent proteolytic activity. This is Proteasome subunit alpha type-7-1A (Prosalpha4T1) from Drosophila melanogaster (Fruit fly).